Consider the following 272-residue polypeptide: NAD kinase (272 aa).

Catalysis depends on D62, which acts as the Proton acceptor. Residues 62 to 63 (DG), R67, 129 to 130 (NE), R140, K157, D159, 170 to 175 (SSYSSS), A194, and Q229 contribute to the NAD(+) site.

The protein belongs to the NAD kinase family. Requires a divalent metal cation as cofactor.

It localises to the cytoplasm. The enzyme catalyses NAD(+) + ATP = ADP + NADP(+) + H(+). Functionally, involved in the regulation of the intracellular balance of NAD and NADP, and is a key enzyme in the biosynthesis of NADP. Catalyzes specifically the phosphorylation on 2'-hydroxyl of the adenosine moiety of NAD to yield NADP. This Thermoplasma volcanium (strain ATCC 51530 / DSM 4299 / JCM 9571 / NBRC 15438 / GSS1) protein is NAD kinase.